Reading from the N-terminus, the 388-residue chain is Succinate--CoA ligase [ADP-forming] subunit beta (388 aa).

The ATP-grasp domain occupies 9–245 (KELLKSYGLP…KSQENERELK (237 aa)). Residues Lys-46, 53 to 55 (GRG), Glu-100, Tyr-103, and Glu-108 each bind ATP. Residues Asn-200 and Asp-214 each coordinate Mg(2+). Substrate is bound by residues Asn-265 and 322 to 324 (GIV).

The protein belongs to the succinate/malate CoA ligase beta subunit family. Heterotetramer of two alpha and two beta subunits. It depends on Mg(2+) as a cofactor.

The enzyme catalyses succinate + ATP + CoA = succinyl-CoA + ADP + phosphate. It catalyses the reaction GTP + succinate + CoA = succinyl-CoA + GDP + phosphate. Its pathway is carbohydrate metabolism; tricarboxylic acid cycle; succinate from succinyl-CoA (ligase route): step 1/1. Functionally, succinyl-CoA synthetase functions in the citric acid cycle (TCA), coupling the hydrolysis of succinyl-CoA to the synthesis of either ATP or GTP and thus represents the only step of substrate-level phosphorylation in the TCA. The beta subunit provides nucleotide specificity of the enzyme and binds the substrate succinate, while the binding sites for coenzyme A and phosphate are found in the alpha subunit. This chain is Succinate--CoA ligase [ADP-forming] subunit beta, found in Psychrobacter cryohalolentis (strain ATCC BAA-1226 / DSM 17306 / VKM B-2378 / K5).